Consider the following 127-residue polypeptide: Histone H2B type 1-A (127 aa).

The tract at residues 1 to 36 (MPEVSSKGATISKKGFKKAVVKTQKKEGKKRKRTRK) is disordered. Residue Pro2 is modified to N-acetylproline. Lys7, Lys13, Lys14, Lys17, Lys18, Lys22, and Lys25 each carry N6-acetyllysine; alternate. Residues Lys7, Lys13, Lys14, Lys17, Lys18, Lys22, Lys25, and Lys36 each carry the N6-crotonyllysine; alternate modification. N6-lactoyllysine; alternate is present on residues Lys7 and Lys13. Lys7 is covalently cross-linked (Glycyl lysine isopeptide (Lys-Gly) (interchain with G-Cter in SUMO2); alternate). 4 positions are modified to N6-lactoyllysine; alternate: Lys17, Lys18, Lys22, and Lys25. Residue Lys22 forms a Glycyl lysine isopeptide (Lys-Gly) (interchain with G-Cter in SUMO2); alternate linkage. At Lys36 the chain carries N6-succinyllysine; alternate. A Glycyl lysine isopeptide (Lys-Gly) (interchain with G-Cter in ubiquitin); alternate cross-link involves residue Lys36. Ser38 carries the post-translational modification Phosphoserine. Lys45 is subject to N6-lactoyllysine; alternate. Lys48 bears the N6-methyllysine mark. Residue Lys59 is modified to N6,N6-dimethyllysine. Arg81 carries the dimethylated arginine modification. Ser86 carries the post-translational modification Phosphoserine. At Lys87 the chain carries N6-acetyllysine; alternate. Position 87 is an N6-lactoyllysine; alternate (Lys87). Lys87 is modified (N6,N6,N6-trimethyllysine; alternate). Arg88 and Arg94 each carry omega-N-methylarginine. Lys110 is subject to N6-lactoyllysine; alternate. Lys110 carries the post-translational modification N6-methyllysine. Phosphothreonine is present on Thr117. Lys118 and Lys122 each carry N6-lactoyllysine; alternate. An N6-succinyllysine; alternate mark is found at Lys118 and Lys122. Lys118 carries the N6-methylated lysine; alternate modification. Residue Lys122 forms a Glycyl lysine isopeptide (Lys-Gly) (interchain with G-Cter in ubiquitin); alternate linkage.

It belongs to the histone H2B family. As to quaternary structure, the nucleosome is a histone octamer containing two molecules each of H2A, H2B, H3 and H4 assembled in one H3-H4 heterotetramer and two H2A-H2B heterodimers. Monoubiquitination at Lys-36 (H2BK34Ub) by the MSL1/MSL2 dimer is required for histone H3 'Lys-4' (H3K4me) and 'Lys-79' (H3K79me) methylation and transcription activation at specific gene loci, such as HOXA9 and MEIS1 loci. Similarly, monoubiquitination at Lys-122 (H2BK120Ub) by the RNF20/40 complex gives a specific tag for epigenetic transcriptional activation and is also prerequisite for histone H3 'Lys-4' and 'Lys-79' methylation. It also functions cooperatively with the FACT dimer to stimulate elongation by RNA polymerase II. H2BK120Ub also acts as a regulator of mRNA splicing: deubiquitination by USP49 is required for efficient cotranscriptional splicing of a large set of exons. Post-translationally, crotonylation (Kcr) is specifically present in male germ cells and marks testis-specific genes in post-meiotic cells, including X-linked genes that escape sex chromosome inactivation in haploid cells. Crotonylation marks active promoters and enhancers and confers resistance to transcriptional repressors. It is also associated with post-meiotically activated genes on autosomes. In terms of processing, acetylated during spermatogenesis. Acetylated form is most abundant in spermatogonia compared to spermatocytes and round spermatids. Phosphorylated at Thr-117 in spermatogonia, spermatocytes and round spermatids. Post-translationally, methylated at Lys-118 in spermatogonia, spermatocytes and round spermatids. In terms of processing, lactylated in macrophages by EP300/P300 by using lactoyl-CoA directly derived from endogenous or exogenous lactate, leading to stimulates gene transcription. In terms of tissue distribution, mainly expressed in testis, and the corresponding protein is also present in mature sperm (at protein level). Also found in some fat cells.

Its subcellular location is the nucleus. It is found in the chromosome. Its function is as follows. Variant histone specifically required to direct the transformation of dissociating nucleosomes to protamine in male germ cells. Entirely replaces classical histone H2B prior nucleosome to protamine transition and probably acts as a nucleosome dissociating factor that creates a more dynamic chromatin, facilitating the large-scale exchange of histones. Core component of nucleosome. Nucleosomes wrap and compact DNA into chromatin, limiting DNA accessibility to the cellular machineries which require DNA as a template. Histones thereby play a central role in transcription regulation, DNA repair, DNA replication and chromosomal stability. DNA accessibility is regulated via a complex set of post-translational modifications of histones, also called histone code, and nucleosome remodeling. Also found in fat cells, its function and the presence of post-translational modifications specific to such cells are still unclear. The polypeptide is Histone H2B type 1-A (Homo sapiens (Human)).